We begin with the raw amino-acid sequence, 241 residues long: Phosphoribosyl isomerase A (241 aa).

Asp-11 functions as the Proton acceptor in the catalytic mechanism. The Proton donor role is filled by Asp-130.

This sequence belongs to the HisA/HisF family.

The protein localises to the cytoplasm. It carries out the reaction 1-(5-phospho-beta-D-ribosyl)-5-[(5-phospho-beta-D-ribosylamino)methylideneamino]imidazole-4-carboxamide = 5-[(5-phospho-1-deoxy-D-ribulos-1-ylimino)methylamino]-1-(5-phospho-beta-D-ribosyl)imidazole-4-carboxamide. The enzyme catalyses N-(5-phospho-beta-D-ribosyl)anthranilate = 1-(2-carboxyphenylamino)-1-deoxy-D-ribulose 5-phosphate. The protein operates within amino-acid biosynthesis; L-histidine biosynthesis; L-histidine from 5-phospho-alpha-D-ribose 1-diphosphate: step 4/9. Its pathway is amino-acid biosynthesis; L-tryptophan biosynthesis; L-tryptophan from chorismate: step 3/5. In terms of biological role, involved in both the histidine and tryptophan biosynthetic pathways. The sequence is that of Phosphoribosyl isomerase A from Streptomyces griseus subsp. griseus (strain JCM 4626 / CBS 651.72 / NBRC 13350 / KCC S-0626 / ISP 5235).